Reading from the N-terminus, the 483-residue chain is Glycogen synthase (483 aa).

Residue K18 coordinates ADP-alpha-D-glucose.

The protein belongs to the glycosyltransferase 1 family. Bacterial/plant glycogen synthase subfamily.

The enzyme catalyses [(1-&gt;4)-alpha-D-glucosyl](n) + ADP-alpha-D-glucose = [(1-&gt;4)-alpha-D-glucosyl](n+1) + ADP + H(+). The protein operates within glycan biosynthesis; glycogen biosynthesis. Functionally, synthesizes alpha-1,4-glucan chains using ADP-glucose. This chain is Glycogen synthase, found in Methylocella silvestris (strain DSM 15510 / CIP 108128 / LMG 27833 / NCIMB 13906 / BL2).